Here is a 288-residue protein sequence, read N- to C-terminus: 4-diphosphocytidyl-2-C-methyl-D-erythritol kinase (288 aa).

The active site involves Lys8. 92–102 (PVAAGMAGGST) lines the ATP pocket. The active site involves Asp134.

This sequence belongs to the GHMP kinase family. IspE subfamily.

The catalysed reaction is 4-CDP-2-C-methyl-D-erythritol + ATP = 4-CDP-2-C-methyl-D-erythritol 2-phosphate + ADP + H(+). It functions in the pathway isoprenoid biosynthesis; isopentenyl diphosphate biosynthesis via DXP pathway; isopentenyl diphosphate from 1-deoxy-D-xylulose 5-phosphate: step 3/6. Its function is as follows. Catalyzes the phosphorylation of the position 2 hydroxy group of 4-diphosphocytidyl-2C-methyl-D-erythritol. The sequence is that of 4-diphosphocytidyl-2-C-methyl-D-erythritol kinase from Clostridium perfringens (strain 13 / Type A).